The following is a 378-amino-acid chain: Succinyl-diaminopimelate desuccinylase (378 aa).

A Zn(2+)-binding site is contributed by H68. The active site involves D70. D101 lines the Zn(2+) pocket. The active-site Proton acceptor is the E135. E136, E164, and H350 together coordinate Zn(2+).

The protein belongs to the peptidase M20A family. DapE subfamily. In terms of assembly, homodimer. The cofactor is Zn(2+). Co(2+) is required as a cofactor.

The catalysed reaction is N-succinyl-(2S,6S)-2,6-diaminopimelate + H2O = (2S,6S)-2,6-diaminopimelate + succinate. Its pathway is amino-acid biosynthesis; L-lysine biosynthesis via DAP pathway; LL-2,6-diaminopimelate from (S)-tetrahydrodipicolinate (succinylase route): step 3/3. Functionally, catalyzes the hydrolysis of N-succinyl-L,L-diaminopimelic acid (SDAP), forming succinate and LL-2,6-diaminopimelate (DAP), an intermediate involved in the bacterial biosynthesis of lysine and meso-diaminopimelic acid, an essential component of bacterial cell walls. This Vibrio campbellii (strain ATCC BAA-1116) protein is Succinyl-diaminopimelate desuccinylase.